The chain runs to 92 residues: Small ribosomal subunit protein uS19 (92 aa).

This sequence belongs to the universal ribosomal protein uS19 family.

Functionally, protein S19 forms a complex with S13 that binds strongly to the 16S ribosomal RNA. In Bifidobacterium longum subsp. infantis (strain ATCC 15697 / DSM 20088 / JCM 1222 / NCTC 11817 / S12), this protein is Small ribosomal subunit protein uS19.